A 307-amino-acid polypeptide reads, in one-letter code: Probable acetylxylan esterase A (307 aa).

An N-terminal signal peptide occupies residues 1 to 19 (MILLSYLLTYLLCALTCSA). The active-site Charge relay system is Ser150. Residues Asn192 and Asn270 are each glycosylated (N-linked (GlcNAc...) asparagine).

Belongs to the carbohydrate esterase 1 (CE1) family. AxeA subfamily. As to quaternary structure, monomer.

The protein resides in the secreted. The enzyme catalyses Deacetylation of xylans and xylo-oligosaccharides.. It functions in the pathway glycan degradation; xylan degradation. Its function is as follows. Acetylxylan esterase involved in the hydrolysis of xylan, a major structural heterogeneous polysaccharide found in plant biomass representing the second most abundant polysaccharide in the biosphere, after cellulose. Degrades acetylated xylans by cleaving acetyl side groups from the hetero-xylan backbone. This is Probable acetylxylan esterase A (axeA) from Aspergillus flavus.